Reading from the N-terminus, the 62-residue chain is Large ribosomal subunit protein bL28 (62 aa).

This sequence belongs to the bacterial ribosomal protein bL28 family.

In Thermoanaerobacter sp. (strain X514), this protein is Large ribosomal subunit protein bL28.